A 5762-amino-acid chain; its full sequence is Mucin-5B (5762 aa).

The signal sequence occupies residues 1–25 (MGAPSACRTLVLALAAMLVVPQAET). Residues 27–50 (GPVEPSWENAGHTMDGGAPTSSPT) are disordered. The 171-residue stretch at 75-245 (RVCSTWGDFH…KLDGPTEQCP (171 aa)) folds into the VWFD 1 domain. 2 disulfides stabilise this stretch: C77–C207 and C99–C244. N-linked (GlcNAc...) asparagine glycosylation occurs at N145. E194 is a binding site for Cu(2+). N201 and N254 each carry an N-linked (GlcNAc...) asparagine glycan. Residues H311 and H358 each coordinate Cu(2+). Positions 329–385 (CPLNMQHQECGSPCTDTCSNPQRAQLCEDHCVDGCFCPPGTVLDDITHSGCLPLGQC) constitute a TIL 1 domain. N401 carries N-linked (GlcNAc...) asparagine glycosylation. Positions 423–598 (GTCSVQGGAH…NTWKAQAACA (176 aa)) constitute a VWFD 2 domain. 3 disulfides stabilise this stretch: C425-C562, C447-C597, and C469-C477. N515 carries an N-linked (GlcNAc...) asparagine glycan. TIL domains lie at 695 to 752 (CPKS…AQEC) and 805 to 855 (NSSA…EEDC). N805 carries an N-linked (GlcNAc...) asparagine glycan. A VWFC 1 domain is found at 855–927 (CPCVHNEATY…EYILAQDYCG (73 aa)). Positions 893–1062 (GTCVAYGDGH…NSWKLSPSCP (170 aa)) constitute a VWFD 3 domain. 4 disulfide bridges follow: C895–C1026, C917–C1061, C926–C1023, and C944–C951. N-linked (GlcNAc...) asparagine glycosylation is present at N929. N-linked (GlcNAc...) asparagine glycosylation is found at N1276 and N1292. Residues 1333-1432 (CVREVCRWSS…RVLCCEYVPC (100 aa)) form a Cys-rich subdomain 1 repeat. The 7 X Cys-rich subdomain repeats stretch occupies residues 1333-4228 (CVREVCRWSS…RVFCCNYGHC (2896 aa)). A glycan (C-linked (Man) tryptophan) is linked at W1340. Disordered regions lie at residues 1437 to 1462 (APGT…QTTA) and 1480 to 1502 (LTSQ…GTTT). Positions 1450–1462 (TEPAVPTPTQTTA) are enriched in low complexity. The Cys-rich subdomain 2 repeat unit spans residues 1503 to 1604 (CQPRCQWTEW…VLCCSDDHCR (102 aa)). W1509 carries a C-linked (Man) tryptophan glycan. N1556 carries N-linked (GlcNAc...) asparagine glycosylation. A disordered region spans residues 1607-1783 (ATTPPPTTEL…NTTTSQGTTR (177 aa)). Residues 1614–1624 (TELETATTTTT) show a composition bias toward low complexity. Polar residues-rich tracts occupy residues 1625–1638 (QALF…SSPG) and 1645–1662 (ASTT…SPRY). Residues 1663 to 1684 (TSTLGTATTGGPTTPAGSTEPT) are compositionally biased toward low complexity. Residues 1689–1706 (ATSTLPTRSALPGTTGSL) show a composition bias toward polar residues. Low complexity-rich tracts occupy residues 1739-1756 (EPLT…LSTS) and 1765-1777 (TETT…NTTT). N1774 carries an N-linked (GlcNAc...) asparagine glycan. Residues 1784 to 1885 (CQPKCEWTEW…VLCCDDYSHC (102 aa)) form a Cys-rich subdomain 3 repeat. W1790 carries a C-linked (Man) tryptophan glycan. The span at 1890–1987 (ATSSTATPSS…TSVTPIPSSS (98 aa)) shows a compositional bias: low complexity. Disordered regions lie at residues 1890–2019 (ATSS…TAHT), 2031–2100 (GATG…GTTH), 2114–2211 (TGSM…HTVR), and 2242–2302 (TGTT…SSPT). The segment at 1890 to 2199 (ATSSTATPSS…VPNTMATTHG (310 aa)) is 11 X approximate tandem repeats, Ser/Thr-rich. The segment covering 1988–1997 (LGTTWTRLSQ) has biased composition (polar residues). The segment covering 1998-2019 (TTTPTATMSTATPSSTPETAHT) has biased composition (low complexity). The span at 2114 to 2181 (TGSMATPSSS…TSNTVTPSSA (68 aa)) shows a compositional bias: low complexity. Over residues 2182–2199 (LGTTHTPPVPNTMATTHG) the composition is skewed to polar residues. The stretch at 2313-2414 (GCEPQCAWSE…RVFCCNYGHC (102 aa)) is one Cys-rich subdomain 4 repeat. C-linked (Man) tryptophan glycosylation occurs at W2320. Residues 2419–2756 (ATSSTAMPSS…VPNTTATTHG (338 aa)) form an 11 X approximate tandem repeats, Ser/Thr-rich region. 3 disordered regions span residues 2443-2462 (ATTT…PGTT), 2473-2522 (TVTV…ATAL), and 2556-2861 (TTPT…PTSA). The span at 2556-2738 (TTPTATMSTA…TSSTVTPSSA (183 aa)) shows a compositional bias: low complexity. The span at 2739–2786 (LGTTHTPPVPNTTATTHGRSLSPSSPHTVRTAWTSATSGTLGTTHITE) shows a compositional bias: polar residues. Residue N2749 is glycosylated (N-linked (GlcNAc...) asparagine). Low complexity predominate over residues 2787-2861 (PSTGTSHTPA…TLLPSSPTSA (75 aa)). The HAT 1 repeat unit spans residues 2854–2886 (LPSSPTSAPITTVVTMGCEPQCAWSEWLDYSYP). The Cys-rich subdomain 5 repeat unit spans residues 2871-2971 (CEPQCAWSEW…RVFCCNYGHC (101 aa)). W2877 is a glycosylation site (C-linked (Man) tryptophan). Residues 2976-3456 (ATSSTATPSS…VPNTTATTHG (481 aa)) form a 17 X approximate tandem repeats, Ser/Thr-rich region. Low complexity-rich tracts occupy residues 3001-3017 (TTTA…STPG) and 3026-3049 (TSTA…RTAT). Disordered stretches follow at residues 3001-3049 (TTTA…RTAT), 3256-3357 (TTPT…GTTH), 3371-3469 (TGSM…TVRT), and 3481-3561 (TTHI…PTSA). The span at 3371–3438 (TGSMATPSSS…TSSTVTPSSA (68 aa)) shows a compositional bias: low complexity. The span at 3439 to 3456 (LGTTHTPPVPNTTATTHG) shows a compositional bias: polar residues. N3449 carries an N-linked (GlcNAc...) asparagine glycan. Over residues 3487-3561 (PSTVTSHTPA…TLLPSSPTSA (75 aa)) the composition is skewed to low complexity. One copy of the HAT 2 repeat lies at 3554–3586 (LPSSPTSAPITTVVTTGCEPQCAWSEWLDYSYP). One copy of the Cys-rich subdomain 6 repeat lies at 3571-3671 (CEPQCAWSEW…RVFCCNYGHC (101 aa)). C-linked (Man) tryptophan glycosylation is present at W3577. The interval 3676 to 4013 (ATSSTATPSS…VPNTTATTHG (338 aa)) is 11 X approximate tandem repeats, Ser/Thr-rich. 3 disordered regions span residues 3699 to 3779 (TATT…ATAL), 3813 to 3917 (TTPT…HTPT), and 3956 to 4118 (ATGS…PTSA). Residues 3956–3995 (ATGSTTNPSSTPGTTPIPPVLTTTATTPAATSSTVTPSSA) are compositionally biased toward low complexity. Positions 3996–4043 (LGTTHTPPVPNTTATTHGRSLSPSSPHTVRTAWTSATSGTLGTTHITE) are enriched in polar residues. N-linked (GlcNAc...) asparagine glycosylation is present at N4006. The segment covering 4044 to 4118 (PSTGTSHTPA…TLLPSSPTSA (75 aa)) has biased composition (low complexity). The HAT 3 repeat unit spans residues 4111-4143 (LPSSPTSAPITTVVTTGCEPQCAWSEWLDYSYP). The Cys-rich subdomain 7 repeat unit spans residues 4128–4228 (CEPQCAWSEW…RVFCCNYGHC (101 aa)). C-linked (Man) tryptophan glycosylation is present at W4134. The 23 X approximate tandem repeats, Ser/Thr-rich stretch occupies residues 4233-4879 (ATSSTAMPSS…TLGTAHTPKV (647 aa)). Low complexity-rich tracts occupy residues 4259–4274 (TTAS…STPG) and 4283–4389 (TSPA…PGTT). Disordered regions lie at residues 4259–4389 (TTAS…PGTT), 4428–4447 (ATTT…PGTT), 4458–4527 (TVTV…AIPS), and 4541–4750 (TTPT…ATSF). N-linked (GlcNAc...) asparagine glycans are attached at residues N4804, N4960, N5017, N5024, N5046, N5096, and N5111. A VWFD 4 domain is found at 5073–5261 (CICSMWGGSH…VPDSRKDGCW (189 aa)). 3 disulfides stabilise this stretch: C5075/C5221, C5097/C5260, and C5121/C5132. N-linked (GlcNAc...) asparagine glycosylation is present at N5215. In terms of domain architecture, VWFC 2 spans 5412 to 5484 (CPCVGPDGFP…NPCCPETVCV (73 aa)). N-linked (GlcNAc...) asparagine glycosylation is found at N5486, N5526, N5565, N5566, N5602, N5612, N5663, N5677, and N5721. The region spanning 5521-5587 (QLCSYNGTFY…VAGQCCGECV (67 aa)) is the VWFC 3 domain. Cystine bridges form between C5653-C5705, C5672-C5719, C5681-C5735, and C5685-C5737. The CTCK domain occupies 5653–5742 (CEEDSCQVRI…DECGCTPFCV (90 aa)).

Homomultimer; disulfide-linked. The N- and C-terminus mediate their assembly into higher order structures to form filaments. The CTCK domains of two polypeptides associate in the endoplasmic reticulum to generate intermolecularly disulfide-bonded dimers. These dimers progress to the Golgi apparatus, which is a more acidic environment than the endoplasmic reticulum. Under acidic conditions, the N-termini form non-covalent intermolecular interactions that juxtapose assemblies from different CTCK-linked dimers to produce long, disulfide-linked polymers that remain highly compact until secretion. Highly glycosylated. C-, N- and O-glycosylated. C-mannosylated in the Cys-rich subdomains probably on the first Trp residue of the WXXW motif. Highly O-glycosylated in the Ser/Thr-rich tandem repeat (TR) region. The repeat region is about 59% O-glycosylated with a high abundance of NeuAc(2)Hex(1)HexNac1-ol. As to expression, expressed on surface airway epithelia. Expressed mainly in mucous cells of submucosal glands of airway tissues. Highly expressed in the sublingual gland. Also found in submaxillary glands, endocervix, gall bladder, and pancreas.

Its subcellular location is the secreted. Functionally, gel-forming mucin that is thought to contribute to the lubricating and viscoelastic properties of whole saliva and cervical mucus. This chain is Mucin-5B (MUC5B), found in Homo sapiens (Human).